The following is a 329-amino-acid chain: Sex comb on midleg-like protein 1 (329 aa).

2 positions are modified to phosphoserine: S138 and S238. Residues 258–325 enclose the SAM domain; that stretch reads WSVEAVVLFL…YYIDRLKQGK (68 aa).

Belongs to the SCM family.

The protein resides in the nucleus. Functionally, putative Polycomb group (PcG) protein. PcG proteins act by forming multiprotein complexes, which are required to maintain the transcriptionally repressive state of homeotic genes throughout development. May be involved in spermatogenesis during sexual maturation. This is Sex comb on midleg-like protein 1 (SCML1) from Nomascus leucogenys (Northern white-cheeked gibbon).